The chain runs to 68 residues: Putative membrane protein insertion efficiency factor (68 aa).

This sequence belongs to the UPF0161 family.

It localises to the cell membrane. In terms of biological role, could be involved in insertion of integral membrane proteins into the membrane. The protein is Putative membrane protein insertion efficiency factor of Herpetosiphon aurantiacus (strain ATCC 23779 / DSM 785 / 114-95).